A 568-amino-acid polypeptide reads, in one-letter code: Urease subunit alpha (568 aa).

The region spanning 130-568 (GGIDTHIHFI…LPMAQRYFLF (439 aa)) is the Urease domain. Ni(2+) is bound by residues histidine 135, histidine 137, and lysine 218. Lysine 218 bears the N6-carboxylysine mark. Histidine 220 is a binding site for substrate. Ni(2+) contacts are provided by histidine 247 and histidine 273. The Proton donor role is filled by histidine 321. Residue aspartate 361 coordinates Ni(2+).

It belongs to the metallo-dependent hydrolases superfamily. Urease alpha subunit family. In terms of assembly, heterotrimer of UreA (gamma), UreB (beta) and UreC (alpha) subunits. Three heterotrimers associate to form the active enzyme. It depends on Ni cation as a cofactor. Carboxylation allows a single lysine to coordinate two nickel ions.

It is found in the cytoplasm. It catalyses the reaction urea + 2 H2O + H(+) = hydrogencarbonate + 2 NH4(+). It participates in nitrogen metabolism; urea degradation; CO(2) and NH(3) from urea (urease route): step 1/1. The protein is Urease subunit alpha of Burkholderia pseudomallei (strain 1106a).